A 589-amino-acid chain; its full sequence is 3-hydroxy-3-methylglutaryl coenzyme A reductase 2-B (589 aa).

Topologically, residues 1 to 35 (MDVRRRPVTKTLTAGEPLKSQNQHSSSLKASDALP) are lumenal. The helical transmembrane segment at 36–56 (LPLYLTNGLFFTMFFSVMYFL) threads the bilayer. The Cytoplasmic portion of the chain corresponds to 57–79 (LHRWREKIRNSVPLHVVTLSELA). Residues 80 to 100 (ALVLLVASVIYLLGFFGIGFV) traverse the membrane as a helical segment. At 101–544 (QSLIRPSPDS…SKESPGPNSR (444 aa)) the chain is on the lumenal side. Residue Asn256 is glycosylated (N-linked (GlcNAc...) asparagine). The Charge relay system role is filled by Glu268. The N-linked (GlcNAc...) asparagine glycan is linked to Asn332. Catalysis depends on charge relay system residues Lys400 and Asp476. A helical transmembrane segment spans residues 545–565 (LLASIVAGSVLAGELSLMSAL). Topologically, residues 566-589 (AAGQLVKSHMKFNRSSKDVSKLSS) are cytoplasmic. Catalysis depends on His574, which acts as the Proton donor.

Belongs to the HMG-CoA reductase family.

It localises to the endoplasmic reticulum membrane. The enzyme catalyses (R)-mevalonate + 2 NADP(+) + CoA = (3S)-3-hydroxy-3-methylglutaryl-CoA + 2 NADPH + 2 H(+). It participates in metabolic intermediate biosynthesis; (R)-mevalonate biosynthesis; (R)-mevalonate from acetyl-CoA: step 3/3. Functionally, catalyzes the synthesis of mevalonate, the specific precursor of all isoprenoid compounds present in plants. Component of the triterpene saponins (e.g. ginsenosides or panaxosides) and phytosterols biosynthetic pathways. Promotes triterpenes accumulation in roots. The polypeptide is 3-hydroxy-3-methylglutaryl coenzyme A reductase 2-B (Panax ginseng (Korean ginseng)).